A 99-amino-acid chain; its full sequence is Small ribosomal subunit protein eS24 (99 aa).

This sequence belongs to the eukaryotic ribosomal protein eS24 family.

The polypeptide is Small ribosomal subunit protein eS24 (rps2e) (Thermoplasma volcanium (strain ATCC 51530 / DSM 4299 / JCM 9571 / NBRC 15438 / GSS1)).